We begin with the raw amino-acid sequence, 693 residues long: Tegument protein UL47 (693 aa).

2 disordered regions span residues 1–32 (MSAR…DGVG) and 48–126 (ELEA…GYLG). Residues 48–57 (ELEALEEMAG) are compositionally biased toward acidic residues. The RNA-binding stretch occupies residues 50 to 75 (EALEEMAGDEPPVRRRREGPRARRRR). Positions 63–75 (RRRREGPRARRRR) match the Nuclear localization signal motif. Residues 63–75 (RRRREGPRARRRR) are compositionally biased toward basic residues. The Nuclear export signal signature appears at 647 to 670 (SVLGPRVRVVDIMSQFRKLLMGDE).

It belongs to the alphaherpesvirinae HHV-1 UL47 family. In terms of assembly, interacts with US3 kinase. Interacts with UL31 and UL34; these interactions seem important for efficient virion nuclear egress. Interacts with UL41/VHS. Post-translationally, phosphorylated by US3. This phosphorylation is required for proper nuclear localization.

It localises to the virion tegument. The protein localises to the host nucleus. Its subcellular location is the host cytoplasm. Functionally, tegument protein that can bind to various RNA transcripts. Plays a role in the attenuation of selective viral and cellular mRNA degradation by modulating the activity of host shutoff RNase UL41/VHS. Also plays a role in the primary envelopment of virions in the perinuclear space, probably by interacting with two nuclear egress proteins UL31 and UL34. The polypeptide is Tegument protein UL47 (Homo sapiens (Human)).